A 445-amino-acid chain; its full sequence is GTPase Der (445 aa).

2 consecutive EngA-type G domains span residues 3–167 (PVIA…YAGE) and 180–353 (IKIA…AAAM). GTP is bound by residues 9–16 (GRPNVGKS), 56–60 (DTGGF), 119–122 (NKAE), 186–193 (GRPNVGKS), 233–237 (DTAGL), and 298–301 (NKWD). The 85-residue stretch at 354-438 (KKLPTPKLTR…PLRIEFRSST (85 aa)) folds into the KH-like domain.

The protein belongs to the TRAFAC class TrmE-Era-EngA-EngB-Septin-like GTPase superfamily. EngA (Der) GTPase family. As to quaternary structure, associates with the 50S ribosomal subunit.

GTPase that plays an essential role in the late steps of ribosome biogenesis. This chain is GTPase Der, found in Burkholderia pseudomallei (strain 1106a).